Here is a 345-residue protein sequence, read N- to C-terminus: MNTTSLSYRDAGVDIDAGDALVENIKPFAKRTMRPEVLGGIGGFGALVEISKKYKEPVLVSGTDGVGTKLKLAFDWNRHDTVGIDLVAMSVNDILVQGAEPLFFLDYFACGKLDVAQATEVIKGIAAGCEQAGCALTGGETAEMPGMYPAGEYDLAGFAVGVVEKSKVISGRDIVPGDVVLGLASNGVHSNGYSLVRKIIDRAQPELDAPFDGDKTLRDAVIAPTRIYVKPLLKLMETLPVKGMAHITGGGITENTPRVLPDNTVAQIDAASWQLPKLFQWLQREGNVDIQEMYRTFNCGIGMVVVVAPEHAEQALALLREAGETVYRIGQVRERQGGEHQTQIA.

Belongs to the AIR synthase family.

The protein localises to the cytoplasm. It catalyses the reaction 2-formamido-N(1)-(5-O-phospho-beta-D-ribosyl)acetamidine + ATP = 5-amino-1-(5-phospho-beta-D-ribosyl)imidazole + ADP + phosphate + H(+). It participates in purine metabolism; IMP biosynthesis via de novo pathway; 5-amino-1-(5-phospho-D-ribosyl)imidazole from N(2)-formyl-N(1)-(5-phospho-D-ribosyl)glycinamide: step 2/2. This chain is Phosphoribosylformylglycinamidine cyclo-ligase, found in Chromobacterium violaceum (strain ATCC 12472 / DSM 30191 / JCM 1249 / CCUG 213 / NBRC 12614 / NCIMB 9131 / NCTC 9757 / MK).